Reading from the N-terminus, the 351-residue chain is Peptide chain release factor 1 (351 aa).

Gln-229 is subject to N5-methylglutamine.

It belongs to the prokaryotic/mitochondrial release factor family. Post-translationally, methylated by PrmC. Methylation increases the termination efficiency of RF1.

It localises to the cytoplasm. In terms of biological role, peptide chain release factor 1 directs the termination of translation in response to the peptide chain termination codons UAG and UAA. The polypeptide is Peptide chain release factor 1 (Ruegeria pomeroyi (strain ATCC 700808 / DSM 15171 / DSS-3) (Silicibacter pomeroyi)).